The primary structure comprises 895 residues: Probable LRR receptor-like serine/threonine-protein kinase At5g48740 (895 aa).

A signal peptide spans 1–16 (MLFWVLLSSFCVFCFS). Over 17 to 544 (SPDGFLSLSC…INKKQRKQNR (528 aa)) the chain is Extracellular. N-linked (GlcNAc...) asparagine glycans are attached at residues asparagine 36, asparagine 50, asparagine 60, asparagine 140, asparagine 195, asparagine 234, and asparagine 318. LRR repeat units follow at residues 385 to 407 (RVTS…GDLL), 408 to 430 (DLKT…GSLK), 431 to 453 (DLQK…EDLV), 454 to 477 (NLEV…GKLK), 478 to 500 (KLRL…LNIT), and 511 to 532 (CLSF…PQVT). Residues asparagine 416, asparagine 436, asparagine 462, asparagine 498, and asparagine 521 are each glycosylated (N-linked (GlcNAc...) asparagine). The helical transmembrane segment at 545–565 (IAILLGVSGGALFATFLVFVF) threads the bilayer. Residues 566–895 (MSIFTRRQRN…SYLAASAHTD (330 aa)) lie on the Cytoplasmic side of the membrane. One can recognise a Protein kinase domain in the interval 606-888 (RNFKEVIGRG…EAYSLQLSYL (283 aa)). ATP contacts are provided by residues 612-620 (IGRGSFGAV) and lysine 634. Tyrosine 679 is subject to Phosphotyrosine. The active-site Proton acceptor is the aspartate 732. At serine 736 the chain carries Phosphoserine. Phosphothreonine occurs at positions 767 and 772. Tyrosine 780 carries the phosphotyrosine modification.

This sequence belongs to the protein kinase superfamily. Ser/Thr protein kinase family.

It is found in the membrane. The enzyme catalyses L-seryl-[protein] + ATP = O-phospho-L-seryl-[protein] + ADP + H(+). The catalysed reaction is L-threonyl-[protein] + ATP = O-phospho-L-threonyl-[protein] + ADP + H(+). The polypeptide is Probable LRR receptor-like serine/threonine-protein kinase At5g48740 (Arabidopsis thaliana (Mouse-ear cress)).